Here is a 574-residue protein sequence, read N- to C-terminus: Arginine--tRNA ligase (574 aa).

A 'HIGH' region motif is present at residues 126–136 (PNIAKRMHVGH).

It belongs to the class-I aminoacyl-tRNA synthetase family. In terms of assembly, monomer.

Its subcellular location is the cytoplasm. The catalysed reaction is tRNA(Arg) + L-arginine + ATP = L-arginyl-tRNA(Arg) + AMP + diphosphate. The polypeptide is Arginine--tRNA ligase (Chloroflexus aggregans (strain MD-66 / DSM 9485)).